Reading from the N-terminus, the 419-residue chain is MDKFRVQGPTRLQGEVTISGAKNAALPILFSALLAEEPVEIQNVPKLKDIDTTMKLLSQLGAKVERNGSVWIDAGPVDVFCAPYDLVKTMRASIWALGPLVARFGQGQVSLPGGCAIGARPVDLHISGLEQLGAEIKLEEGYVKASVSGRLKGAHIVMDKVSVGATVTIMSAATLAEGTTIIENAAREPEIVDTANFLNALGAKITGQGSDRITIEGVQRLGGGVYRVLPDRIETGTFLVAAAISGGKILCRNAQPDTLDAVLAKLRDAGADIETGEDWISLDMHGNRPKAVNVRTAPHPGFPTDMQAQFTLLNLVAEGTGVITETIFENRFMHIPELIRMGAHAEIESNTAICHGVKQLSGAQVMATDLRASASLVLAGCIAEGTTIVDRIYHIDRGYERIEDKLQALGANIQRVKGE.

Phosphoenolpyruvate is bound at residue 22-23 (KN). Arg-91 is a UDP-N-acetyl-alpha-D-glucosamine binding site. The Proton donor role is filled by Cys-115. Cys-115 is modified (2-(S-cysteinyl)pyruvic acid O-phosphothioketal). UDP-N-acetyl-alpha-D-glucosamine-binding positions include 120-124 (RPVDL), 160-163 (KVSV), Asp-305, and Ile-327.

This sequence belongs to the EPSP synthase family. MurA subfamily.

The protein resides in the cytoplasm. It carries out the reaction phosphoenolpyruvate + UDP-N-acetyl-alpha-D-glucosamine = UDP-N-acetyl-3-O-(1-carboxyvinyl)-alpha-D-glucosamine + phosphate. It participates in cell wall biogenesis; peptidoglycan biosynthesis. Functionally, cell wall formation. Adds enolpyruvyl to UDP-N-acetylglucosamine. In Klebsiella pneumoniae subsp. pneumoniae (strain ATCC 700721 / MGH 78578), this protein is UDP-N-acetylglucosamine 1-carboxyvinyltransferase.